Here is a 319-residue protein sequence, read N- to C-terminus: Urease accessory protein UreD (319 aa).

Residues R284 to H319 are disordered.

This sequence belongs to the UreD family. As to quaternary structure, ureD, UreF and UreG form a complex that acts as a GTP-hydrolysis-dependent molecular chaperone, activating the urease apoprotein by helping to assemble the nickel containing metallocenter of UreC. The UreE protein probably delivers the nickel.

Its subcellular location is the cytoplasm. In terms of biological role, required for maturation of urease via the functional incorporation of the urease nickel metallocenter. The polypeptide is Urease accessory protein UreD (Prochlorococcus marinus (strain MIT 9313)).